Consider the following 480-residue polypeptide: MTVTKMSWRPQYRSSKFRNVYGKVANREHCFDGIPITKNVHDNHFCAVNTRFLAIVTESAGGGSFLVIPLEQTGRIEPNYPKVCGHQGNVLDIKWNPFIDNIIASCSEDTSVRIWEIPEGGLKRNMTEALLELHGHSRRVGLVEWHPTTNNILFSAGYDYKVLIWNLDVGEPVKMIDCHTDVILCMSFNTDGSLLTTTCKDKKLRVIEPRSGRVLQEANCKNHRVNRVVFLGNMKRLLTTGVSRWNTRQIALWDQEDLSMPLIEEEIDGLSGLLFPFYDADTHMLYLAGKGDGNIRYYEISTEKPYLSYLMEFRSPAPQKGLGVMPKHGLDVSACEVFRFYKLVTLKGLIEPISMIVPRRSDSYQEDIYPMTPGTEPALTPDEWLGGINRDPVLMSLKEGYKKSSKMVFKAPIKEKKSVVVNGIDLLENVPPRTENELLRMFFRQQDEIRRLKEELAQKDIRIRQLQLELKNLRNSPKNC.

WD repeat units follow at residues 29-77 (HCFD…GRIE), 78-127 (PNYP…RNMT), 128-170 (EALL…LDVG), 171-212 (EPVK…PRSG), 213-259 (RVLQ…EDLS), 260-305 (MPLI…TEKP), and 306-345 (YLSY…KLVT). A coiled-coil region spans residues 436–479 (NELLRMFFRQQDEIRRLKEELAQKDIRIRQLQLELKNLRNSPKN).

This sequence belongs to the WD repeat coronin family. In terms of assembly, binds to F-actin and to vinculin. In terms of tissue distribution, expressed predominantly in brain.

It localises to the cytoplasm. The protein localises to the cytoskeleton. Its function is as follows. May play a role in the reorganization of neuronal actin structure. This Homo sapiens (Human) protein is Coronin-2B (CORO2B).